The chain runs to 100 residues: Integration host factor subunit alpha (100 aa).

It belongs to the bacterial histone-like protein family. Heterodimer of an alpha and a beta chain.

Its function is as follows. This protein is one of the two subunits of integration host factor, a specific DNA-binding protein that functions in genetic recombination as well as in transcriptional and translational control. The polypeptide is Integration host factor subunit alpha (Buchnera aphidicola subsp. Schizaphis graminum (strain Sg)).